We begin with the raw amino-acid sequence, 382 residues long: Na(+)/H(+) antiporter NhaA 2 (382 aa).

Helical transmembrane passes span 8–28, 49–69, 87–107, 115–135, 146–166, 169–189, 209–229, 252–272, 286–306, 325–345, and 353–373; these read FFSSPAAGGIVLIIASAAAII, LSVEHWINDALMAVFFMMVGL, ALPGFAALGGMAVPAAIYVWF, LAGWAIPAATDIAFALGVLAL, IFLSALAILDDMGAVAIIALF, SNISFLMLAGAAVTVALLFIM, FFMLQSGVHATIAGILLALFI, WVTFLILPLFGFANAGVALSG, VALGLFVGKQAGIFGLSLLAV, VSVLCGIGFTMSLFIGNLAFA, and EVKVGVLAGSVLAALAGMLIL.

It belongs to the NhaA Na(+)/H(+) (TC 2.A.33) antiporter family.

It localises to the cell inner membrane. It carries out the reaction Na(+)(in) + 2 H(+)(out) = Na(+)(out) + 2 H(+)(in). Na(+)/H(+) antiporter that extrudes sodium in exchange for external protons. The polypeptide is Na(+)/H(+) antiporter NhaA 2 (Klebsiella pneumoniae subsp. pneumoniae (strain ATCC 700721 / MGH 78578)).